Reading from the N-terminus, the 205-residue chain is uncharacterized protein (205 aa).

5 consecutive transmembrane segments (helical) span residues 5–25 (VWLAYLLTAVVFSLAPGSGTV), 41–61 (GAIIGLQIGLACHIVLVGIGI), 68–88 (SALAFTLIKWIGAAYLVWLGI), 117–137 (LINLTNPKSIVFLVALFPQFI), and 147–167 (FLVLGITTVTIDAIVMFGYTA).

This sequence belongs to the Rht family.

It localises to the cell inner membrane. Functionally, involved in positive regulation of motility and negative regulation of biofilm formation. This is an uncharacterized protein from Vibrio cholerae serotype O1 (strain ATCC 39315 / El Tor Inaba N16961).